The following is a 317-amino-acid chain: MKHELSSMKAFVILAESSSFNNAAKLLNITQPALTRRIKKMEEDLHVQLFERTTRKVTLTKAGKRLLPEARELIKKFDETLFNIRDMNAYHRGMVTLACIPTAVFYFLPLAIGKFNELYPNIKVRILEQGTNNCMESVLCNESDFGINMNNVTNSSIDFTPLVNEPFVLACRRDHPLAKKQLVEWQELVGYKMIGVRSSSGNRLLIEQQLADKPWKLDWFYEVRHLSTSLGLVEAGLGISALPGLAMPHAPYSSIIGIPLVEPVIRRTLGIIRRKDAVLSPAAERFFALLINLWTDDKDNLWTNIVERQRHALQEIG.

The HTH lysR-type domain maps to 1-60 (MKHELSSMKAFVILAESSSFNNAAKLLNITQPALTRRIKKMEEDLHVQLFERTTRKVTLT). Residues 20 to 40 (FNNAAKLLNITQPALTRRIKK) constitute a DNA-binding region (H-T-H motif).

It belongs to the LysR transcriptional regulatory family.

This is an uncharacterized protein from Escherichia coli (strain K12).